We begin with the raw amino-acid sequence, 185 residues long: Ribosome-recycling factor (185 aa).

It belongs to the RRF family.

It is found in the cytoplasm. Its function is as follows. Responsible for the release of ribosomes from messenger RNA at the termination of protein biosynthesis. May increase the efficiency of translation by recycling ribosomes from one round of translation to another. This is Ribosome-recycling factor from Symbiobacterium thermophilum (strain DSM 24528 / JCM 14929 / IAM 14863 / T).